Reading from the N-terminus, the 438-residue chain is Glutamine synthetase (438 aa).

In terms of domain architecture, GS beta-grasp spans 14 to 98 (EEVEYVDIRF…VHCNVVEPDT (85 aa)). The GS catalytic domain maps to 106 to 438 (PRIALKAEAY…LAGDVFTKDQ (333 aa)). Mg(2+)-binding residues include glutamate 130 and glutamate 132. Aspartate 208 is a binding site for ATP. Positions 213 and 220 each coordinate Mg(2+). L-glutamate contacts are provided by residues 264–265 (NG) and glycine 265. Residue histidine 269 participates in Mg(2+) binding. Residues 271 to 273 (NMS) and serine 273 each bind ATP. Residues arginine 321, glutamate 327, and arginine 339 each contribute to the L-glutamate site. Arginine 339, arginine 344, and lysine 352 together coordinate ATP. Glutamate 357 lines the Mg(2+) pocket. Arginine 359 provides a ligand contact to L-glutamate. Position 397 is an O-AMP-tyrosine (tyrosine 397).

The protein belongs to the glutamine synthetase family. Oligomer of 12 subunits arranged in the form of two hexameric ring. Mg(2+) serves as cofactor.

Its subcellular location is the cytoplasm. It catalyses the reaction L-glutamate + NH4(+) + ATP = L-glutamine + ADP + phosphate + H(+). The activity of this enzyme could be controlled by adenylation under conditions of abundant glutamine. Catalyzes the ATP-dependent biosynthesis of glutamine from glutamate and ammonia. This is Glutamine synthetase from Rhodobacter capsulatus (Rhodopseudomonas capsulata).